Reading from the N-terminus, the 356-residue chain is Tricetin 3',4',5'-O-trimethyltransferase (356 aa).

123–129 is a binding site for substrate; the sequence is MNQDKVL. The tract at residues 155 to 173 is substrate binding; sequence AFEYHGTDPRFNRVFNEGM. S-adenosyl-L-methionine contacts are provided by Gly-201, Asp-224, Asp-244, Met-245, and Lys-258. His-262 serves as the catalytic Proton acceptor.

The protein belongs to the class I-like SAM-binding methyltransferase superfamily. Cation-independent O-methyltransferase family. COMT subfamily. As to quaternary structure, homodimer. The monomer is fully active and dimerization is not required for sequential methylation. As to expression, expressed in roots, stems and leaves.

The catalysed reaction is tricetin + 3 S-adenosyl-L-methionine = 3',4',5'-O-trimethyltricetin + 3 S-adenosyl-L-homocysteine + 3 H(+). Functionally, flavonoid B-ring-specific O-methyltransferase with a preference for flavones &gt; dihydroflavones &gt; flavonols that possess at least two B-ring hydroxyl groups. Active with tricetin, 5-hydroxyferulic acid, luteolin, quercitin, eriodictyol, quercetagetin, taxifolin, gossypetin and myricetin. No activity with naringenin, apigenin, kaempferol, 7,8-dihydroxy- or 5,7,8-trihydroxy flavones, chlorogenic acid, gallic acid or daphnetin. Catalyzes the sequential O-methylation of tricetin via 3'-O-methyltricetin, 3',5'-O-methyltricetin to 3',4',5'-O-trimethyltricetin. May also be involved in S lignin biosynthesis. This is Tricetin 3',4',5'-O-trimethyltransferase (OMT2) from Triticum aestivum (Wheat).